Reading from the N-terminus, the 476-residue chain is Glutamyl-tRNA(Gln) amidotransferase subunit A (476 aa).

Active-site charge relay system residues include Lys-77 and Ser-152. Catalysis depends on Ser-176, which acts as the Acyl-ester intermediate.

The protein belongs to the amidase family. GatA subfamily. In terms of assembly, heterotrimer of A, B and C subunits.

The enzyme catalyses L-glutamyl-tRNA(Gln) + L-glutamine + ATP + H2O = L-glutaminyl-tRNA(Gln) + L-glutamate + ADP + phosphate + H(+). Its function is as follows. Allows the formation of correctly charged Gln-tRNA(Gln) through the transamidation of misacylated Glu-tRNA(Gln) in organisms which lack glutaminyl-tRNA synthetase. The reaction takes place in the presence of glutamine and ATP through an activated gamma-phospho-Glu-tRNA(Gln). The sequence is that of Glutamyl-tRNA(Gln) amidotransferase subunit A from Acidobacterium capsulatum (strain ATCC 51196 / DSM 11244 / BCRC 80197 / JCM 7670 / NBRC 15755 / NCIMB 13165 / 161).